The following is a 122-amino-acid chain: Large ribosomal subunit protein uL14c (122 aa).

The protein belongs to the universal ribosomal protein uL14 family. As to quaternary structure, part of the 50S ribosomal subunit.

It localises to the plastid. It is found in the chloroplast. Its function is as follows. Binds to 23S rRNA. The sequence is that of Large ribosomal subunit protein uL14c from Lotus japonicus (Lotus corniculatus var. japonicus).